The sequence spans 469 residues: MSALTPPTDMPTPTTDKITQAAMETIYLCKFRVSMDGEWLCLRELDDISLTPDPEPTHEDPNYLMANERMNLMNMAKLSIKGLIESALNLGRTLDSDYAPLQQFFVVMEHCLKHGLKAKKTFLGQNKSFWGPLELVEKLVPEAAEITASVKDLPGLKTPVGRGRAWLRLALMQKKLSEYMKALINKKELLSEFYEVNALMMEEEGAIIAGLLVGLNVIDANFCMKGEDLDSQVGVIDFSMYLKDGNSSKGSEGDGQITAILDQKNYVEELNRHLNATVNNLQTKVDLLEKSNTKLTEELAVANNRIITLQEEMERVKEESSYLLESNRKGPKQDRTAEGQALSEARKHLKEETQLRLDVEKELELQISMRQEMELAMKMLEKDVCEKQDALVSLRQQLDDLRALKHELAFKLQSSDLGVKQKSELNSRLEEKTNQMAATIKQLEQSEKDLVKQAKTLNSAANKLIPKHH.

2 positions are modified to phosphothreonine: T5 and T12. Phosphoserine occurs at positions 27, 34, and 49. Residue T51 is modified to Phosphothreonine. Residue D53 is modified to Phosphoserine. The 133-residue stretch at 95–227 folds into the RUN domain; it reads DSDYAPLQQF…IDANFCMKGE (133 aa). 2 coiled-coil regions span residues 271–362 and 422–463; these read NRHL…VEKE and KSEL…AANK. The segment covering 321 to 337 has biased composition (basic and acidic residues); that stretch reads SYLLESNRKGPKQDRTA. The interval 321-342 is disordered; sequence SYLLESNRKGPKQDRTAEGQAL.

Interacts with PAK1. Interacts (via C-terminus) with Ras-related Rab-5 proteins. Interacts (via C-terminus) with Ras-related Rap-2 proteins. Interacts with PIK3CA and PIK3R1. Interacts (via N-terminus) with FSCN1; this interaction induces neuron axon development. Interacts with DBN1. Interacts (via the second coiled coil) with GTP-, but not GDP-bound ARL8A and ARL8B. Interacts with dynactin/DCTN1 and the dynein intermediate chain DYNC1I1/2. Directly interacts with DYNC1LI1. In terms of processing, phosphorylated by PAK1. Isoform 1 is partially phosphorylated. In terms of tissue distribution, expressed in brain (at protein level).

The protein localises to the cytoplasm. Its subcellular location is the endomembrane system. It localises to the cell projection. It is found in the invadopodium. The protein resides in the growth cone. The protein localises to the perikaryon. Its subcellular location is the filopodium. It localises to the lamellipodium. It is found in the lysosome. ARL8 effector that promotes the coupling of endolysosomes to dynein-dynactin for retrograde transport along microtubules. Acts by binding both GTP-bound ARL8 and dynein-dynactin. In nonneuronal cells, promotes concentration of endolysosomes in the juxtanuclear area. In hippocampal neurons, drives retrograde transport of endolysosomes from the axon to the soma. Plays a role in the generation of neuronal polarity formation and axon growth. Implicated in the formation of a single axon by developing neurons. May inhibit the formation of additional axons by inhibition of PI3K in minor neuronal processes. Plays a role in the formation of F-actin-enriched protrusive structures at the cell periphery. Plays a role in cytoskeletal organization by regulating the subcellular localization of FSCN1 and DBN1 at axonal growth cones. The chain is Protein RUFY3 from Mus musculus (Mouse).